Consider the following 218-residue polypeptide: Small ribosomal subunit protein uS3 (218 aa).

The region spanning 38–106 is the KH type-2 domain; the sequence is IREYINKRLQ…REHINIVEIK (69 aa).

It belongs to the universal ribosomal protein uS3 family. Part of the 30S ribosomal subunit. Forms a tight complex with proteins S10 and S14.

In terms of biological role, binds the lower part of the 30S subunit head. Binds mRNA in the 70S ribosome, positioning it for translation. The chain is Small ribosomal subunit protein uS3 from Geobacillus stearothermophilus (Bacillus stearothermophilus).